The following is a 298-amino-acid chain: MIEKAGILIEALPYIRRFYGKTVVIKYGGNAMVAEELKESFAKDIVLMKYIGINPVVVHGGGPQIGRMLKRIGKESDFCAGMRVTDADTMDIVEMVLAGKINKEIVSLINRHGGHAVGLSGKDGNLIEARKLHVYRYKGDDQPPEIIDIGLVGEVNRVNVSILDTLAGGNLIPVIAPVGVGEQGETYNINADLVAGHIAGALQAAKLVLMTDVEGVLDGGGNLISSLTVAEAADALQDETLKGGMIPKVQCAIDALQSGVDKVHIVDGRVPHAILLEIFTDAGVGTEIVRYRRGQSVG.

Substrate-binding positions include 61-62, Arg-83, and Asn-188; that span reads GG.

Belongs to the acetylglutamate kinase family. ArgB subfamily.

It is found in the cytoplasm. It catalyses the reaction N-acetyl-L-glutamate + ATP = N-acetyl-L-glutamyl 5-phosphate + ADP. It functions in the pathway amino-acid biosynthesis; L-arginine biosynthesis; N(2)-acetyl-L-ornithine from L-glutamate: step 2/4. Functionally, catalyzes the ATP-dependent phosphorylation of N-acetyl-L-glutamate. This Syntrophobacter fumaroxidans (strain DSM 10017 / MPOB) protein is Acetylglutamate kinase.